The following is a 223-amino-acid chain: uncharacterized protein (223 aa).

A run of 7 helical transmembrane segments spans residues 25-45, 46-66, 78-98, 105-125, 140-160, 161-181, and 199-219; these read TYFL…ATMA, IGIS…ILFF, LVWT…MLNF, GPIV…GLSA, FLFA…FVGS, TVAH…FILF, and ISMY…LGIM.

Belongs to the BI1 family.

It is found in the cell membrane. This is an uncharacterized protein from Vibrio cholerae serotype O1 (strain ATCC 39315 / El Tor Inaba N16961).